The sequence spans 311 residues: 4-diphosphocytidyl-2-C-methyl-D-erythritol kinase (311 aa).

Lys16 is a catalytic residue. Pro100–Ser110 provides a ligand contact to ATP. Asp142 is a catalytic residue.

Belongs to the GHMP kinase family. IspE subfamily.

The catalysed reaction is 4-CDP-2-C-methyl-D-erythritol + ATP = 4-CDP-2-C-methyl-D-erythritol 2-phosphate + ADP + H(+). It participates in isoprenoid biosynthesis; isopentenyl diphosphate biosynthesis via DXP pathway; isopentenyl diphosphate from 1-deoxy-D-xylulose 5-phosphate: step 3/6. Catalyzes the phosphorylation of the position 2 hydroxy group of 4-diphosphocytidyl-2C-methyl-D-erythritol. In Prochlorococcus marinus (strain MIT 9301), this protein is 4-diphosphocytidyl-2-C-methyl-D-erythritol kinase.